Here is a 61-residue protein sequence, read N- to C-terminus: Large ribosomal subunit protein uL30 (61 aa).

It belongs to the universal ribosomal protein uL30 family. In terms of assembly, part of the 50S ribosomal subunit.

The chain is Large ribosomal subunit protein uL30 from Corynebacterium diphtheriae (strain ATCC 700971 / NCTC 13129 / Biotype gravis).